The following is a 267-amino-acid chain: Thiamine thiazole synthase (267 aa).

Residues Ser41, 60–61 (ER), Gly68, Val132, and 160–162 (HVD) each bind NAD(+). Fe cation contacts are provided by Asp162 and His177. An NAD(+)-binding site is contributed by Met227. Residue Arg237 coordinates glycine.

It belongs to the THI4 family. In terms of assembly, homooctamer; tetramer of dimers. Requires Fe(2+) as cofactor.

The enzyme catalyses hydrogen sulfide + glycine + NAD(+) = ADP-5-ethyl-4-methylthiazole-2-carboxylate + nicotinamide + 3 H2O + H(+). The protein operates within cofactor biosynthesis; thiamine diphosphate biosynthesis. Its function is as follows. Involved in the biosynthesis of the thiazole moiety of thiamine. Catalyzes the conversion of NAD and glycine to adenosine diphosphate 5-(2-hydroxyethyl)-4-methylthiazole-2-carboxylate (ADT), an adenylated thiazole intermediate, using free sulfide as a source of sulfur. This chain is Thiamine thiazole synthase, found in Saccharolobus solfataricus (strain ATCC 35092 / DSM 1617 / JCM 11322 / P2) (Sulfolobus solfataricus).